The following is a 135-amino-acid chain: CDGSH iron-sulfur domain-containing protein 2B (135 aa).

At 1–37 the chain is on the lumenal side; the sequence is MVLETISKIIKTQLPAYLKKFPLPETIGGFARLTVLD. The helical transmembrane segment at 38-60 threads the bilayer; that stretch reads WLRLLPLLGILTLLGYLTIRPFL. At 61–135 the chain is on the cytoplasmic side; that stretch reads PKKKKQKDSL…GPLILKKKII (75 aa). The [2Fe-2S] cluster site is built by Cys99, Cys101, Cys110, and His114.

This sequence belongs to the CISD protein family. CISD2 subfamily. Homodimer. [2Fe-2S] cluster is required as a cofactor.

The protein localises to the endoplasmic reticulum membrane. It is found in the mitochondrion outer membrane. Regulator of autophagy that contributes to antagonize becn1-mediated cellular autophagy at the endoplasmic reticulum. Participates in the interaction of bcl2 with becn1 and is required for bcl2-mediated depression of endoplasmic reticulum Ca(2+) stores during autophagy. This is CDGSH iron-sulfur domain-containing protein 2B (cisd2b) from Oncorhynchus mykiss (Rainbow trout).